The chain runs to 429 residues: Ribosomal RNA small subunit methyltransferase B (429 aa).

S-adenosyl-L-methionine is bound by residues 254–260, Asp277, Asp303, and Asp322; that span reads CAAPGGK. The Nucleophile role is filled by Cys375.

Belongs to the class I-like SAM-binding methyltransferase superfamily. RsmB/NOP family.

The protein localises to the cytoplasm. The catalysed reaction is cytidine(967) in 16S rRNA + S-adenosyl-L-methionine = 5-methylcytidine(967) in 16S rRNA + S-adenosyl-L-homocysteine + H(+). In terms of biological role, specifically methylates the cytosine at position 967 (m5C967) of 16S rRNA. In Cronobacter sakazakii (strain ATCC BAA-894) (Enterobacter sakazakii), this protein is Ribosomal RNA small subunit methyltransferase B.